Here is a 153-residue protein sequence, read N- to C-terminus: Aspartate carbamoyltransferase regulatory chain (153 aa).

Cysteine 109, cysteine 114, cysteine 138, and cysteine 141 together coordinate Zn(2+).

Belongs to the PyrI family. As to quaternary structure, contains catalytic and regulatory chains. Zn(2+) serves as cofactor.

Functionally, involved in allosteric regulation of aspartate carbamoyltransferase. The sequence is that of Aspartate carbamoyltransferase regulatory chain from Shigella flexneri serotype 5b (strain 8401).